A 477-amino-acid polypeptide reads, in one-letter code: Bifunctional protein HldE (477 aa).

The segment at 1–318 is ribokinase; sequence MKVTLPEFER…ENAVRGRADT (318 aa). An N6-acetyllysine modification is found at lysine 179. 195-198 serves as a coordination point for ATP; the sequence is NLSE. Aspartate 264 is an active-site residue. Residues 344 to 477 are cytidylyltransferase; the sequence is MTNGVFDILH…IKKIQLDKKG (134 aa).

This sequence in the N-terminal section; belongs to the carbohydrate kinase PfkB family. In the C-terminal section; belongs to the cytidylyltransferase family. In terms of assembly, homodimer.

It catalyses the reaction D-glycero-beta-D-manno-heptose 7-phosphate + ATP = D-glycero-beta-D-manno-heptose 1,7-bisphosphate + ADP + H(+). The enzyme catalyses D-glycero-beta-D-manno-heptose 1-phosphate + ATP + H(+) = ADP-D-glycero-beta-D-manno-heptose + diphosphate. The protein operates within nucleotide-sugar biosynthesis; ADP-L-glycero-beta-D-manno-heptose biosynthesis; ADP-L-glycero-beta-D-manno-heptose from D-glycero-beta-D-manno-heptose 7-phosphate: step 1/4. Its pathway is nucleotide-sugar biosynthesis; ADP-L-glycero-beta-D-manno-heptose biosynthesis; ADP-L-glycero-beta-D-manno-heptose from D-glycero-beta-D-manno-heptose 7-phosphate: step 3/4. In terms of biological role, catalyzes the phosphorylation of D-glycero-D-manno-heptose 7-phosphate at the C-1 position to selectively form D-glycero-beta-D-manno-heptose-1,7-bisphosphate. Its function is as follows. Catalyzes the ADP transfer from ATP to D-glycero-beta-D-manno-heptose 1-phosphate, yielding ADP-D-glycero-beta-D-manno-heptose. This Escherichia coli O81 (strain ED1a) protein is Bifunctional protein HldE.